Consider the following 396-residue polypeptide: Methionine import ATP-binding protein MetN 2 (396 aa).

An ABC transporter domain is found at 41-280 (VSFELVGKVF…PRHGATRALL (240 aa)). Residue 77–84 (GRSGAGKS) participates in ATP binding.

This sequence belongs to the ABC transporter superfamily. Methionine importer (TC 3.A.1.24) family. The complex is composed of two ATP-binding proteins (MetN), two transmembrane proteins (MetI) and a solute-binding protein (MetQ).

Its subcellular location is the cell inner membrane. It carries out the reaction L-methionine(out) + ATP + H2O = L-methionine(in) + ADP + phosphate + H(+). The catalysed reaction is D-methionine(out) + ATP + H2O = D-methionine(in) + ADP + phosphate + H(+). Functionally, part of the ABC transporter complex MetNIQ involved in methionine import. Responsible for energy coupling to the transport system. In Burkholderia pseudomallei (strain 1710b), this protein is Methionine import ATP-binding protein MetN 2.